The sequence spans 414 residues: Alanine--glyoxylate aminotransferase (414 aa).

Residues 1–23 (MFRMLAKASVTLGSRAASWVRNM) constitute a mitochondrion transit peptide. K231 carries the post-translational modification N6-(pyridoxal phosphate)lysine. The residue at position 247 (K247) is an N6-acetyllysine; alternate. Position 247 is an N6-succinyllysine; alternate (K247). N6-acetyllysine occurs at positions 256 and 334. R382 lines the substrate pocket. Residues 412–414 (NKL) carry the Microbody targeting signal motif.

The protein belongs to the class-V pyridoxal-phosphate-dependent aminotransferase family. Homodimer. Pyridoxal 5'-phosphate is required as a cofactor.

Its subcellular location is the peroxisome. It is found in the mitochondrion matrix. It carries out the reaction L-serine + pyruvate = 3-hydroxypyruvate + L-alanine. The enzyme catalyses glyoxylate + L-alanine = glycine + pyruvate. Catalyzes the transamination of glyoxylate to glycine and contributes to the glyoxylate detoxification. Functionally, catalyzes the transamination between L-serine and pyruvate and weakly contributes to gluconeogenesis from the L-serine metabolism. The protein is Alanine--glyoxylate aminotransferase of Rattus norvegicus (Rat).